Reading from the N-terminus, the 130-residue chain is Small ribosomal subunit protein uS8 (130 aa).

Belongs to the universal ribosomal protein uS8 family. As to quaternary structure, part of the 30S ribosomal subunit.

Its function is as follows. One of the primary rRNA binding proteins, it binds directly to 16S rRNA central domain where it helps coordinate assembly of the platform of the 30S subunit. The protein is Small ribosomal subunit protein uS8 of Pyrococcus furiosus (strain ATCC 43587 / DSM 3638 / JCM 8422 / Vc1).